The following is a 344-amino-acid chain: Galactoside alpha-(1,2)-fucosyltransferase 2 (344 aa).

The Cytoplasmic portion of the chain corresponds to methionine 1–phenylalanine 7. The helical; Signal-anchor for type II membrane protein transmembrane segment at phenylalanine 8 to leucine 28 threads the bilayer. The Lumenal portion of the chain corresponds to histidine 29–histidine 344. Asparagine 189, asparagine 255, asparagine 283, and asparagine 309 each carry an N-linked (GlcNAc...) asparagine glycan.

As to expression, expressed in brain, heart, lung, intestin and kidney.

The protein resides in the golgi apparatus. The protein localises to the golgi stack membrane. The catalysed reaction is a beta-D-galactosyl-(1-&gt;3)-N-acetyl-beta-D-glucosaminyl derivative + GDP-beta-L-fucose = an alpha-L-Fuc-(1-&gt;2)-beta-D-Gal-(1-&gt;3)-beta-D-GlcNAc derivative + GDP + H(+). It catalyses the reaction a beta-D-galactosyl-(1-&gt;4)-N-acetyl-beta-D-glucosaminyl derivative + GDP-beta-L-fucose = an alpha-L-Fuc-(1-&gt;2)-beta-D-Gal-(1-&gt;4)-beta-D-GlcNAc derivative + GDP + H(+). It carries out the reaction a ganglioside GM1 + GDP-beta-L-fucose = a ganglioside Fuc-GM1 + GDP + H(+). The enzyme catalyses a neolactoside nLc4Cer + GDP-beta-L-fucose = a neolactoside IV(2)-alpha-Fuc-nLc4Cer + GDP + H(+). The catalysed reaction is a neolactoside nLc4Cer(d18:1(4E)) + GDP-beta-L-fucose = a neolactoside IV(2)-alpha-Fuc-nLc4Cer(d18:1(4E)) + GDP + H(+). It catalyses the reaction a ganglioside GA1 + GDP-beta-L-fucose = a ganglioside Fuc-GA1 + GDP + H(+). It carries out the reaction Lc4Cer + GDP-beta-L-fucose = alpha-L-fucosyl-(1-&gt;2)-beta-D-galactosyl-(1-&gt;3)-N-acetyl-beta-D-glucosaminyl-(1-&gt;3)-beta-D-galactosyl-(1-&gt;4)-beta-D-glucosyl-(1&lt;-&gt;1')-ceramide + GDP + H(+). The enzyme catalyses a beta-D-Gal-(1-&gt;3)-beta-D-GlcNAc-(1-&gt;3)-beta-D-Gal-(1-&gt;4)-beta-D-Glc-(1&lt;-&gt;1')-Cer(d18:1(4E)) + GDP-beta-L-fucose = alpha-L-fucosyl-(1-&gt;2)- beta-D-galactosyl-(1-&gt;3)-N-acetyl-beta-D-glucosaminyl-(1-&gt;3)-beta-D-galactosyl-(1-&gt;4)-beta-D-glucosyl-(1&lt;-&gt;1')-N-acylsphing-4-enine + GDP + H(+). The catalysed reaction is a ganglioside GD1b + GDP-beta-L-fucose = a ganglioside Fuc-GD1b + GDP + H(+). It catalyses the reaction a ganglioside GM1 (d18:1(4E)) + GDP-beta-L-fucose = a ganglioside Fuc-GM1 (d18:1(4E)) + GDP + H(+). It carries out the reaction a globoside GalGb4Cer (d18:1(4E)) + GDP-beta-L-fucose = a globoside Globo-H (d18:1(4E)) + GDP + H(+). The enzyme catalyses a lactoside III(4)-a-Fuc-Lc4Cer + GDP-beta-L-fucose = a lactoside IV(2),III(4)-a-[Fuc]2-Lc4Cer + GDP + H(+). The catalysed reaction is beta-D-galactosyl-(1-&gt;3)-N-acetyl-D-galactosamine + GDP-beta-L-fucose = alpha-L-fucosyl-(1-&gt;2)-beta-D-galactosyl-(1-&gt;3)-N-acetyl-D-galactosamine + GDP + H(+). Its pathway is protein modification; protein glycosylation. Functionally, catalyzes the transfer of L-fucose, from a guanosine diphosphate-beta-L-fucose, to the terminal galactose on both O- and N-linked glycans chains of cell surface glycoproteins and glycolipids and the resulting epitope regulates several processes such as cell-cell interaction including host-microbe interaction, cell surface expression and cell proliferation. Preferentially fucosylates gangliosides GA1 and GM1 in the antrum, cecum and colon and in the female reproductive organs. Fucosylated host glycoproteins or glycolipids mediate interaction with intestinal microbiota influencing its composition. Creates a soluble precursor oligosaccharide FuC-alpha ((1,2)Galbeta-) called the H antigen which is an essential substrate for the final step in the soluble ABO blood group antigen synthesis pathway. This Bos taurus (Bovine) protein is Galactoside alpha-(1,2)-fucosyltransferase 2.